The chain runs to 715 residues: Palmitoyltransferase ZDHHC5 (715 aa).

Topologically, residues 1-13 (MPAESGKRFKPSK) are cytoplasmic. Residues 14 to 34 (YVPVSAAAIFLVGATTLFFAF) form a helical membrane-spanning segment. At 35–52 (TCPGLSLNVSPAVPIYNA) the chain is on the extracellular side. A helical membrane pass occupies residues 53–73 (IMFLFVLANFSMATFMDPGIF). The Cytoplasmic portion of the chain corresponds to 74–148 (PRAEEDEDKE…NCIGRRNYRY (75 aa)). Position 91 is a phosphotyrosine (tyrosine 91). Positions 104-154 (KWCATCRFYRPPRCSHCSVCDNCVEEFDHHCPWVNNCIGRRNYRYFFLFLL) constitute a DHHC domain. Cysteine 134 (S-palmitoyl cysteine intermediate) is an active-site residue. Residues 149-169 (FFLFLLSLTAHIMGVFGFGLL) traverse the membrane as a helical segment. The Extracellular segment spans residues 170–191 (YVLYHIEELSGVRTAVTMAVMC). The helical transmembrane segment at 192-212 (VAGLFFIPVAGLTGFHVVLVA) threads the bilayer. Residues 213–715 (RGRTTNEQVT…VGGTTYEISV (503 aa)) are Cytoplasmic-facing. Serine 247 carries the phosphoserine modification. The segment at 289–715 (GELRRTKSKG…VGGTTYEISV (427 aa)) is disordered. Threonine 294 is subject to Phosphothreonine. Residues serine 296 and serine 299 each carry the phosphoserine modification. Threonine 303 is subject to Phosphothreonine. The residue at position 345 (serine 345) is a Phosphoserine. Threonine 348 and threonine 350 each carry phosphothreonine. Positions 359 to 373 (SSSSTSAAMPHSSSA) are enriched in low complexity. Serine 380, serine 398, serine 406, and serine 409 each carry phosphoserine. Threonine 411 is subject to Phosphothreonine. A phosphoserine mark is found at serine 415, serine 425, serine 429, and serine 432. The span at 422–432 (SSGSRSSSLKS) shows a compositional bias: low complexity. Threonine 436 carries the phosphothreonine modification. The span at 442–478 (QLQSIRSEGTTSTSYKSLANQTRNGSLSYDSLLTPSD) shows a compositional bias: polar residues. Phosphoserine occurs at positions 529 and 554. The segment covering 581-597 (PRTSSSSDDSKRSPLSK) has biased composition (low complexity). At arginine 617 the chain carries Omega-N-methylarginine. Position 621 is a phosphoserine (serine 621). Threonine 659 carries the post-translational modification Phosphothreonine. Over residues 666 to 677 (LKTTYSKSNGQP) the composition is skewed to polar residues. A phosphoserine mark is found at serine 684 and serine 694. Arginine 697 carries the omega-N-methylarginine modification.

The protein belongs to the DHHC palmitoyltransferase family. ERF2/ZDHHC9 subfamily. Post-translationally, phosphorylation regulates association with endocytic proteins and its subcellular localization. Phosphorylation by LYN during fatty acid uptake leads to inactivation of the activity. In terms of processing, autopalmitoylated. Palmitoylation of the C-terminal tail regulates stimulation-dependent plasma membrane motility. In terms of tissue distribution, highly enriched in brain, detectable in liver and heart, and undetectable in most other tissues.

Its subcellular location is the cell membrane. The catalysed reaction is L-cysteinyl-[protein] + hexadecanoyl-CoA = S-hexadecanoyl-L-cysteinyl-[protein] + CoA. Palmitoyltransferase that catalyzes the addition of palmitate onto various protein substrates such as CTNND2, CD36, GSDMD, NLRP3, NOD1, NOD2, STAT3 and S1PR1 thus plays a role in various biological processes including cell adhesion, inflammation, fatty acid uptake, bacterial sensing or cardiac functions. Plays an important role in the regulation of synapse efficacy by mediating palmitoylation of delta-catenin/CTNND2, thereby increasing synaptic delivery and surface stabilization of alpha-amino-3-hydroxy-5-methyl-4-isoxazole propionic acid receptors (AMPARs). Under basal conditions, remains at the synaptic membrane through FYN-mediated phosphorylation that prevents association with endocytic proteins. Neuronal activity enhances the internalization and trafficking of DHHC5 from spines to dendritic shafts where it palmitoylates delta-catenin/CTNND2. Regulates cell adhesion at the plasma membrane by palmitoylating GOLGA7B and DSG2. Plays a role in innate immune response by mediating the palmitoylation of NOD1 and NOD2 and their proper recruitment to the bacterial entry site and phagosomes. Also participates in fatty acid uptake by palmitoylating CD36 and thereby targeting it to the plasma membrane. Upon binding of fatty acids to CD36, gets phosphorylated by LYN leading to inactivation and subsequent CD36 caveolar endocytosis. Controls oligodendrocyte development by catalyzing STAT3 palmitoylation. Acts as a regulator of inflammatory response by mediating palmitoylation of NLRP3 and GSDMD. Palmitoylates NLRP3 to promote inflammasome assembly and activation. Activates pyroptosis by catalyzing palmitoylation of gasdermin-D (GSDMD), thereby promoting membrane translocation and pore formation of GSDMD. This Mus musculus (Mouse) protein is Palmitoyltransferase ZDHHC5 (Zdhhc5).